We begin with the raw amino-acid sequence, 502 residues long: Glutamate--tRNA ligase (502 aa).

A 'HIGH' region motif is present at residues 9–19 (PSPTGFPHVGT). Positions 250-254 (KLSKR) match the 'KMSKS' region motif. Position 253 (Lys-253) interacts with ATP.

It belongs to the class-I aminoacyl-tRNA synthetase family. Glutamate--tRNA ligase type 1 subfamily. Monomer.

It is found in the cytoplasm. The catalysed reaction is tRNA(Glu) + L-glutamate + ATP = L-glutamyl-tRNA(Glu) + AMP + diphosphate. Catalyzes the attachment of glutamate to tRNA(Glu) in a two-step reaction: glutamate is first activated by ATP to form Glu-AMP and then transferred to the acceptor end of tRNA(Glu). This Acinetobacter baumannii (strain SDF) protein is Glutamate--tRNA ligase.